We begin with the raw amino-acid sequence, 108 residues long: Replication initiation control protein YabA (108 aa).

Zn(2+) contacts are provided by H83, C85, C99, and C102.

The protein belongs to the YabA family. As to quaternary structure, homotetramer. Interacts with both DnaA and DnaN, acting as a bridge between these two proteins. Zn(2+) serves as cofactor.

The protein resides in the cytoplasm. Its subcellular location is the nucleoid. In terms of biological role, involved in control of chromosome replication initiation. Inhibits the cooperative binding of DnaA to the oriC region, thus negatively regulating initiation of chromosome replication. Inhibits the ability of DnaA-ATP to form a helix on DNA; does not disassemble preformed DnaA-DNA helices. Decreases the residence time of DnaA on the chromosome at its binding sites (oriC, replication forks and promoter-binding sites). Tethers DnaA to the replication machinery via the DNA polymerase beta sliding clamp subunit (dnaN). Associates with oriC and other DnaA targets on the chromosome in a DnaA-dependent manner. In Lactococcus lactis subsp. lactis (strain IL1403) (Streptococcus lactis), this protein is Replication initiation control protein YabA.